We begin with the raw amino-acid sequence, 51 residues long: Large ribosomal subunit protein eL39 (51 aa).

This sequence belongs to the eukaryotic ribosomal protein eL39 family. Interacts with IMPACT.

In Gallus gallus (Chicken), this protein is Large ribosomal subunit protein eL39 (RPL39).